The chain runs to 140 residues: Active regulator of SIRT1 (140 aa).

Disordered regions lie at residues 1-52 and 95-123; these read MSAS…KNKA and QQVL…EGTV. Residues 108–120 are compositionally biased toward basic and acidic residues; it reads DRPAEKKEKKKPE.

It belongs to the AROS family. In terms of assembly, part of the small subunit (SSU) processome, composed of more than 70 proteins and the RNA chaperone small nucleolar RNA (snoRNA) U3.

The protein localises to the nucleus. The protein resides in the nucleolus. In terms of biological role, part of the small subunit (SSU) processome, first precursor of the small eukaryotic ribosomal subunit. During the assembly of the SSU processome in the nucleolus, many ribosome biogenesis factors, an RNA chaperone and ribosomal proteins associate with the nascent pre-rRNA and work in concert to generate RNA folding, modifications, rearrangements and cleavage as well as targeted degradation of pre-ribosomal RNA by the RNA exosome. Acts as a chaperone that specifically mediates the integration of RPS19 in state post-A1. Direct regulator of SIRT1. The sequence is that of Active regulator of SIRT1 (RPS19BP1) from Gallus gallus (Chicken).